Reading from the N-terminus, the 732-residue chain is MNFDQLTDEQKQQLYLQHLQQQQQLQQQQQQLQQQQHQLQQQQQSYHLQQQQAAYQQQNQAQLQQDDSYMDEDTSELINQPPVQLDHGSPIRQQPQMSAFMPSPRFAQSESFDNHLNVDPNNTERFTSMDSMNFQPPASTFTQLGNGSSTNLSEISSGQNSLLSNHSVNNLPTALTSDTSPPVQQHPQFQPQQQQQQQQPQQQQIFQQQQQQQQQQQQPQQSRAVVNQSVSTEAANSDMTGSNTKYVYFERKPNLLSKTTQDKAASIKLTLENYYTSSVSHAIERNQRRLELENKIANEDIGSSEERKNRQLQNLGKKESQFLRLKRTKLALEDFHTVKVIGKGAFGEVRLVQKKDTGKIYAMKTLLKSEMFNKDQLAHVKAERDVLAGSDSPWIVALYYSFQDSQYLYLIMEFLPGGDLMTMLIRWEVFTEDITRFYIAECVLAIEAIHKLGFIHRDIKPDNILIDNRGHVKLSDFGLSTGFHKTHDSNYYNKLLEKEPSNTHLQPNQLTSGRNSVMVDAIHLTMSNRQTMQTWRKSRRLMAYSTVGTPDYIAPEIFIHQGYGQECDWWSLGAIMFECLIGWPPFCSENPHDTYRKILNWQESFQIPEDVHLSPEAEDLIKRFLTSAENRIGRYGGAEEIKQHPFFRGVDWDSIRDVQAPFVPRLSSMTDTRHFPTDDLASVPDNPAMSKAMEQRELDAKNGGGRKNPKEDLPFIGYTYSRFDYLTRKNAL.

The segment at 111 to 240 is disordered; sequence SFDNHLNVDP…STEAANSDMT (130 aa). The segment covering 119–159 has biased composition (polar residues); that stretch reads DPNNTERFTSMDSMNFQPPASTFTQLGNGSSTNLSEISSGQ. A compositionally biased stretch (low complexity) spans 160-171; the sequence is NSLLSNHSVNNL. Positions 172–183 are enriched in polar residues; sequence PTALTSDTSPPV. Residues 185-221 are compositionally biased toward low complexity; sequence QHPQFQPQQQQQQQQPQQQQIFQQQQQQQQQQQQPQQ. A compositionally biased stretch (polar residues) spans 222–240; it reads SRAVVNQSVSTEAANSDMT. Residues 281–310 adopt a coiled-coil conformation; that stretch reads HAIERNQRRLELENKIANEDIGSSEERKNR. Positions 335–647 constitute a Protein kinase domain; it reads FHTVKVIGKG…AEEIKQHPFF (313 aa). ATP contacts are provided by residues 341–349 and K364; that span reads IGKGAFGEV. Residue D458 is the Proton acceptor of the active site. The AGC-kinase C-terminal domain occupies 648–730; sequence RGVDWDSIRD…SRFDYLTRKN (83 aa).

This sequence belongs to the protein kinase superfamily. STE Ser/Thr protein kinase family. COT1 subfamily. As to quaternary structure, interacts with MOB2 and BCR1.

Its subcellular location is the bud neck. The protein resides in the cell tip. It carries out the reaction L-seryl-[protein] + ATP = O-phospho-L-seryl-[protein] + ADP + H(+). It catalyses the reaction L-threonyl-[protein] + ATP = O-phospho-L-threonyl-[protein] + ADP + H(+). Functionally, serine/threonine-protein kinase required for wild-type hyphal growth and transcriptional regulation of cell-wall-associated genes. Involved in the biofilm formation through phosphorylation of the master regulator of biofilm formation BCR1. In Candida albicans (strain SC5314 / ATCC MYA-2876) (Yeast), this protein is Serine/threonine-protein kinase CBK1 (CBK1).